The following is a 155-amino-acid chain: Small ribosomal subunit protein uS7c (155 aa).

This sequence belongs to the universal ribosomal protein uS7 family. In terms of assembly, part of the 30S ribosomal subunit.

It localises to the plastid. Its subcellular location is the chloroplast. Functionally, one of the primary rRNA binding proteins, it binds directly to 16S rRNA where it nucleates assembly of the head domain of the 30S subunit. This chain is Small ribosomal subunit protein uS7c (rps7), found in Staurastrum punctulatum (Green alga).